A 119-amino-acid chain; its full sequence is Ribonuclease P protein component (119 aa).

This sequence belongs to the RnpA family. Consists of a catalytic RNA component (M1 or rnpB) and a protein subunit.

It catalyses the reaction Endonucleolytic cleavage of RNA, removing 5'-extranucleotides from tRNA precursor.. In terms of biological role, RNaseP catalyzes the removal of the 5'-leader sequence from pre-tRNA to produce the mature 5'-terminus. It can also cleave other RNA substrates such as 4.5S RNA. The protein component plays an auxiliary but essential role in vivo by binding to the 5'-leader sequence and broadening the substrate specificity of the ribozyme. This chain is Ribonuclease P protein component, found in Borreliella burgdorferi (strain ZS7) (Borrelia burgdorferi).